A 714-amino-acid chain; its full sequence is Phosphate acetyltransferase (714 aa).

Residues 391–714 (AFRYQLTELA…LTAIQSAQQQ (324 aa)) form a phosphate acetyltransferase region.

In the N-terminal section; belongs to the CobB/CobQ family. The protein in the C-terminal section; belongs to the phosphate acetyltransferase and butyryltransferase family. In terms of assembly, homohexamer.

The protein localises to the cytoplasm. It catalyses the reaction acetyl-CoA + phosphate = acetyl phosphate + CoA. It participates in metabolic intermediate biosynthesis; acetyl-CoA biosynthesis; acetyl-CoA from acetate: step 2/2. Inhibited by NADH and ATP. Pyruvate and PEP act as activators of the acetyl phosphate forming reaction while inhibiting the formation of acetyl-CoA. In terms of biological role, involved in acetate metabolism. Catalyzes the reversible interconversion of acetyl-CoA and acetyl phosphate. The direction of the overall reaction changes depending on growth conditions. On minimal medium acetyl-CoA is generated. In rich medium acetyl-CoA is converted to acetate and allowing the cell to dump the excess of acetylation potential in exchange for energy in the form of ATP. The main pathway for acetate production during exponential phase. The chain is Phosphate acetyltransferase (pta) from Escherichia coli (strain K12).